Reading from the N-terminus, the 962-residue chain is Glycine dehydrogenase (decarboxylating) (962 aa).

K709 bears the N6-(pyridoxal phosphate)lysine mark.

It belongs to the GcvP family. In terms of assembly, the glycine cleavage system is composed of four proteins: P, T, L and H. Requires pyridoxal 5'-phosphate as cofactor.

The enzyme catalyses N(6)-[(R)-lipoyl]-L-lysyl-[glycine-cleavage complex H protein] + glycine + H(+) = N(6)-[(R)-S(8)-aminomethyldihydrolipoyl]-L-lysyl-[glycine-cleavage complex H protein] + CO2. Functionally, the glycine cleavage system catalyzes the degradation of glycine. The P protein binds the alpha-amino group of glycine through its pyridoxal phosphate cofactor; CO(2) is released and the remaining methylamine moiety is then transferred to the lipoamide cofactor of the H protein. The sequence is that of Glycine dehydrogenase (decarboxylating) from Shewanella sp. (strain MR-4).